A 660-amino-acid polypeptide reads, in one-letter code: Probable rhamnogalacturonate lyase B (660 aa).

The first 20 residues, 1 to 20, serve as a signal peptide directing secretion; it reads MRLSVSLGLASLWTAIGATA. Asparagine 22, asparagine 27, asparagine 109, asparagine 142, asparagine 238, asparagine 284, asparagine 432, asparagine 492, asparagine 532, asparagine 594, and asparagine 635 each carry an N-linked (GlcNAc...) asparagine glycan.

This sequence belongs to the polysaccharide lyase 4 family.

The protein localises to the secreted. The catalysed reaction is Endotype eliminative cleavage of L-alpha-rhamnopyranosyl-(1-&gt;4)-alpha-D-galactopyranosyluronic acid bonds of rhamnogalacturonan I domains in ramified hairy regions of pectin leaving L-rhamnopyranose at the reducing end and 4-deoxy-4,5-unsaturated D-galactopyranosyluronic acid at the non-reducing end.. Pectinolytic enzymes consist of four classes of enzymes: pectin lyase, polygalacturonase, pectin methylesterase and rhamnogalacturonase. Degrades the rhamnogalacturonan I (RG-I) backbone of pectin. This is Probable rhamnogalacturonate lyase B (rglB) from Aspergillus terreus (strain NIH 2624 / FGSC A1156).